The primary structure comprises 548 residues: Alpha-1,3-mannosyl-glycoprotein 4-beta-N-acetylglucosaminyltransferase B (548 aa).

The Cytoplasmic portion of the chain corresponds to 1-7 (MRLRNGT). Residues 8–28 (FLTLLLFCLCAFLSLSWYAAL) form a helical; Signal-anchor for type II membrane protein membrane-spanning segment. Over 29-548 (SGQKGDVVDI…LSEIFLKKAD (520 aa)) the chain is Lumenal. Residues 36-83 (VDIYQREFLALRDRLHAAEQESLKRSKELNLVLEEIKRAVSERQALRD) are a coiled coil. N-linked (GlcNAc...) asparagine glycans are attached at residues Asn-87 and Asn-103.

This sequence belongs to the glycosyltransferase 54 family. As to quaternary structure, interacts with SLC35A3. It depends on a divalent metal cation as a cofactor. N-glycosylated.

It is found in the golgi apparatus membrane. It catalyses the reaction N(4)-{beta-D-GlcNAc-(1-&gt;2)-alpha-D-Man-(1-&gt;3)-[beta-D-GlcNAc-(1-&gt;2)-alpha-D-Man-(1-&gt;6)]-beta-D-Man-(1-&gt;4)-beta-D-GlcNAc-(1-&gt;4)-beta-D-GlcNAc}-L-asparaginyl-[protein] + UDP-N-acetyl-alpha-D-glucosamine = N(4)-{beta-D-GlcNAc-(1-&gt;2)-[beta-D-GlcNAc-(1-&gt;4)]-alpha-D-Man-(1-&gt;3)-[beta-D-GlcNAc-(1-&gt;2)-alpha-D-Man-(1-&gt;6)]-beta-D-Man-(1-&gt;4)-beta-D-GlcNAc-(1-&gt;4)-beta-D-GlcNAc}-L-asparaginyl-[protein] + UDP + H(+). The catalysed reaction is an N(4)-{beta-D-GlcNAc-(1-&gt;2)-alpha-D-Man-(1-&gt;3)-[alpha-D-Man-(1-&gt;6)]-beta-D-Man-(1-&gt;4)-beta-D-GlcNAc-(1-&gt;4)-beta-D-GlcNAc}-L-asparaginyl-[protein] + UDP-N-acetyl-alpha-D-glucosamine = an N(4)-{beta-D-GlcNAc-(1-&gt;2)-[beta-D-GlcNAc-(1-&gt;4)]-alpha-D-Man-(1-&gt;3)-[alpha-D-Man-(1-&gt;6)]-beta-D-Man-(1-&gt;4)-beta-D-GlcNAc-(1-&gt;4)-beta-D-GlcNAc}-L-asparaginyl-[protein] + UDP + H(+). It carries out the reaction an N(4)-{beta-D-GlcNAc-(1-&gt;2)-alpha-D-Man-(1-&gt;3)-[beta-D-GlcNAc-(1-&gt;2)-[beta-D-GlcNAc-(1-&gt;6)]-alpha-D-Man-(1-&gt;6)]-beta-D-Man-(1-&gt;4)-beta-D-GlcNAc-(1-&gt;4)-beta-D-GlcNAc}-L-asparaginyl-[protein] + UDP-N-acetyl-alpha-D-glucosamine = an N(4)-{beta-D-GlcNAc-(1-&gt;2)-[beta-D-GlcNAc-(1-&gt;4)]-alpha-D-Man-(1-&gt;3)-[beta-D-GlcNAc-(1-&gt;2)-[beta-D-GlcNAc-(1-&gt;6)]-alpha-D-Man-(1-&gt;6)]-beta-D-Man-(1-&gt;4)-beta-D-GlcNAc-(1-&gt;4)-beta-D-GlcNAc}-L-asparaginyl-[protein] + UDP + H(+). The enzyme catalyses an N(4)-{beta-D-GlcNAc-(1-&gt;2)-alpha-D-Man-(1-&gt;3)-[beta-D-GlcNAc-(1-&gt;2)-alpha-D-Man-(1-&gt;6)]-beta-D-Man-(1-&gt;4)-beta-D-GlcNAc-(1-&gt;4)-[alpha-L-Fuc-(1-&gt;6)]-beta-D-GlcNAc}-L-asparaginyl-[protein] + UDP-N-acetyl-alpha-D-glucosamine = N(4)-{beta-D-GlcNAc-(1-&gt;2)-[beta-D-GlcNAc-(1-&gt;4)]-alpha-D-Man-(1-&gt;3)-[beta-D-GlcNAc-(1-&gt;2)-alpha-D-Man-(1-&gt;6)]-beta-D-Man-(1-&gt;4)-beta-D-GlcNAc-(1-&gt;4)-[alpha-L-Fuc-(1-&gt;6)]-beta-D-GlcNAc}-asparaginyl-[protein] + UDP + H(+). It catalyses the reaction an N(4)-{beta-D-GlcNAc-(1-&gt;2)-alpha-D-Man-(1-&gt;3)-[beta-D-Gal-(1-&gt;4)-beta-D-GlcNAc-(1-&gt;2)-alpha-D-Man-(1-&gt;6)]-beta-D-Man-(1-&gt;4)-beta-D-GlcNAc-(1-&gt;4)-beta-D-GlcNAc}-L-asparaginyl-[protein] + UDP-N-acetyl-alpha-D-glucosamine = an N(4)-{beta-D-GlcNAc-(1-&gt;2)-[beta-D-GlcNAc-(1-&gt;4)]-alpha-D-Man-(1-&gt;3)-[beta-D-Gal-(1-&gt;4)-beta-D-GlcNAc-(1-&gt;2)-alpha-D-Man-(1-&gt;6)]-beta-D-Man-(1-&gt;4)-beta-D-GlcNAc-(1-&gt;4)-beta-D-GlcNAc}-L-asparaginyl-[protein] + UDP + H(+). The catalysed reaction is N(4)-{beta-D-GlcNAc-(1-&gt;2)-alpha-D-Man-(1-&gt;3)-[alpha-D-Man-(1-&gt;3)-{alpha-D-Man-(1-&gt;6)}-alpha-D-Man-(1-&gt;6)]-beta-D-Man-(1-&gt;4)-beta-D-GlcNAc-(1-&gt;4)-beta-D-GlcNAc}-asparaginyl-[protein] + UDP-N-acetyl-alpha-D-glucosamine = N(4)-{beta-D-GlcNAc-(1-&gt;2)-[beta-D-GlcNAc-(1-&gt;4)]-alpha-D-Man-(1-&gt;3)-[alpha-D-Man-(1-&gt;3)-{alpha-D-Man-(1-&gt;6)}-alpha-D-Man-(1-&gt;6)]-beta-D-Man-(1-&gt;4)-beta-D-GlcNAc-(1-&gt;4)-beta-D-GlcNAc}-asparaginyl-[protein] + UDP + H(+). It carries out the reaction N(4)-{beta-D-GlcNAc-(1-&gt;2)-alpha-D-Man-(1-&gt;3)-beta-D-Man-(1-&gt;4)-beta-D-GlcNAc-(1-&gt;4)-beta-D-GlcNAc}-asparaginyl-[protein] + UDP-N-acetyl-alpha-D-glucosamine = N(4)-{beta-D-GlcNAc-(1-&gt;2)-[beta-D-GlcNAc-(1-&gt;4)]-alpha-D-Man-(1-&gt;3)-beta-D-Man-(1-&gt;4)-beta-D-GlcNAc-(1-&gt;4)-beta-D-GlcNAc}-asparaginyl-[protein] + UDP + H(+). It participates in protein modification; protein glycosylation. Functionally, glycosyltransferase that catalyzes the transfer of GlcNAc from UDP-GlcNAc to the GlcNAcbeta1-2Manalpha1-3 arm of the core structure of N-linked glycans through a beta1-4 linkage and participates in the production of tri- and tetra-antennary N-linked sugar chains. Prefers complex-type N-glycans over hybrid-types. Has lower affinities for donors or acceptors than MGAT4A, suggesting that, under physiological conditions, it is not the main contributor in N-glycan biosynthesis. The sequence is that of Alpha-1,3-mannosyl-glycoprotein 4-beta-N-acetylglucosaminyltransferase B from Mus musculus (Mouse).